Here is a 317-residue protein sequence, read N- to C-terminus: Ribosomal protein L11 methyltransferase (317 aa).

The S-adenosyl-L-methionine site is built by Thr-158, Gly-179, Asp-201, and Asn-244.

The protein belongs to the methyltransferase superfamily. PrmA family.

It localises to the cytoplasm. It catalyses the reaction L-lysyl-[protein] + 3 S-adenosyl-L-methionine = N(6),N(6),N(6)-trimethyl-L-lysyl-[protein] + 3 S-adenosyl-L-homocysteine + 3 H(+). Its function is as follows. Methylates ribosomal protein L11. In Streptococcus pyogenes serotype M28 (strain MGAS6180), this protein is Ribosomal protein L11 methyltransferase.